The sequence spans 265 residues: Thiazole synthase (265 aa).

Lysine 106 (schiff-base intermediate with DXP) is an active-site residue. 1-deoxy-D-xylulose 5-phosphate contacts are provided by residues glycine 167, 193–194, and 215–216; these read AG and NS.

Belongs to the ThiG family. As to quaternary structure, homotetramer. Forms heterodimers with either ThiH or ThiS.

The protein resides in the cytoplasm. It carries out the reaction [ThiS sulfur-carrier protein]-C-terminal-Gly-aminoethanethioate + 2-iminoacetate + 1-deoxy-D-xylulose 5-phosphate = [ThiS sulfur-carrier protein]-C-terminal Gly-Gly + 2-[(2R,5Z)-2-carboxy-4-methylthiazol-5(2H)-ylidene]ethyl phosphate + 2 H2O + H(+). Its pathway is cofactor biosynthesis; thiamine diphosphate biosynthesis. In terms of biological role, catalyzes the rearrangement of 1-deoxy-D-xylulose 5-phosphate (DXP) to produce the thiazole phosphate moiety of thiamine. Sulfur is provided by the thiocarboxylate moiety of the carrier protein ThiS. In vitro, sulfur can be provided by H(2)S. This chain is Thiazole synthase, found in Prochlorococcus marinus subsp. pastoris (strain CCMP1986 / NIES-2087 / MED4).